A 723-amino-acid polypeptide reads, in one-letter code: MAEEEGPPVELRQRKKPKSSENKESAKEEKISDIPIPERAPKHVLFQRFAKIFIGCLAAVTSGMMYALYLSAYHERKFWFSNRQELEREITFQGDSAIYYSYYKDMLKAPSFERGVYELTHNNKTVSLKTINAVQQMSLYPELIASILYQATGSNEIIEPVYFYIGIVFGLQGIYVTALFVTSWLMSGTWLAGMLTVAWFVINRVDTTRIEYSIPLRENWALPYFACQIAALTGYLKSNLNTYGERFCYLLMSASTYTFMMMWEYSHYLLFLQAISLFLLDTFSVEQSDKVYEVYKIYIFSLFLGYLLQFENPALLVSPLLSLVAALMLAKCLQLNVKKGSFVAKIIKVINFYLVCTLTITLNIIMKMFVPHKENGHMLKFLEVKFGLNMTKNFTMNWLLCQESLQAPSQDFFLRLTQSSLLPFYILVLIICFLSMLQVIFRRINGKSLKETVTLEDGRIGERPEIIYHVIHTILLGSLAMVIEGLKYIWIPYVCMLAAFGVCSPELWMTLFKWLRLRTVHPILLALILSMAVPTIIGLSLWKEFFPRLMTELMELQEFYDPDTVELMTWIKRQAPVAAVFAGSPQLMGAIKLCTGWMVTSLPLYNDDDLLKRNENIYQIYSKRSAEDIYKILTSYKANYLIVEDAICNEVGPMRGCRVKDLLDIANGHMVCEEGDKLTYSKYGRFCHEVKINYSPYVNYFTRVYWNRSYFVYKINTVISFQS.

A disordered region spans residues M1 to D33. Residue A2 is modified to N-acetylalanine. The segment covering K18–S32 has biased composition (basic and acidic residues). 12 helical membrane passes run I52–A72, V161–A178, W184–I202, L222–L240, M260–L280, Y292–F310, L316–V337, V349–V370, L421–F441, I466–L486, I489–M509, and P522–W542.

It belongs to the dpy-19 family. Widely expressed.

The protein localises to the membrane. Functionally, probable C-mannosyltransferase that mediates C-mannosylation of tryptophan residues on target proteins. This Homo sapiens (Human) protein is Probable C-mannosyltransferase DPY19L4 (DPY19L4).